The chain runs to 2148 residues: General transcription factor 3C polypeptide 1 (2148 aa).

Residues 473–487 (GEEAFLSDSESEEES) are compositionally biased toward acidic residues. Disordered stretches follow at residues 473–568 (GEEA…FDPH) and 587–609 (NPKE…KPHK). The span at 491–502 (GKRRGRGSRGHS) shows a compositional bias: basic residues. K533 participates in a covalent cross-link: Glycyl lysine isopeptide (Lys-Gly) (interchain with G-Cter in SUMO2). S666 is subject to Phosphoserine. 2 disordered regions span residues 717–771 (STAN…EKMG) and 818–863 (TGEQ…SSWE). 2 stretches are compositionally biased toward basic and acidic residues: residues 759 to 770 (ESTRVKKTDEKM) and 825 to 835 (HSERKTGKQEP). Residues K769 and K832 each participate in a glycyl lysine isopeptide (Lys-Gly) (interchain with G-Cter in SUMO2) cross-link. S1062 is modified (phosphoserine). Positions 1186 to 1195 (EHFELDREPT) are enriched in basic and acidic residues. Disordered regions lie at residues 1186 to 1238 (EHFE…KKLR), 1597 to 1627 (KSLG…SVEV), 1823 to 1881 (KASG…LPAK), 1893 to 1928 (SPRP…ESVG), and 2127 to 2148 (PRPS…ATSR). Phosphothreonine is present on T1195. Basic residues predominate over residues 1198–1214 (RNRKVRGGKSQKRKRLK). A compositionally biased stretch (basic and acidic residues) spans 1228–1238 (EHPEAKSKKLR). Residues 1605–1616 (LDDDDEEEDLDE) show a composition bias toward acidic residues. S1624, S1853, and S1893 each carry phosphoserine. Low complexity predominate over residues 1903-1912 (EAQAQFAAPE). The segment covering 2132 to 2148 (SCYQSSAQPSTGVATSR) has biased composition (polar residues).

This sequence belongs to the TFIIIC subunit 1 family. As to quaternary structure, part of the TFIIIC subcomplex TFIIIC2, consisting of six subunits, GTF3C1, GTF3C2, GTF3C3, GTF3C4, GTF3C5 and GTF3C6. Interacts with IGHMBP2. Interacts with MAF1.

The protein localises to the nucleus. Functionally, required for RNA polymerase III-mediated transcription. Component of TFIIIC that initiates transcription complex assembly on tRNA and is required for transcription of 5S rRNA and other stable nuclear and cytoplasmic RNAs. Binds to the box B promoter element. This Rattus norvegicus (Rat) protein is General transcription factor 3C polypeptide 1 (Gtf3c1).